Reading from the N-terminus, the 145-residue chain is Putative antiporter subunit mnhG2 (145 aa).

Transmembrane regions (helical) follow at residues 11 to 31 (IAAV…IGIV), 51 to 71 (VLLT…FFSV), and 72 to 92 (RLLL…HLVA).

Belongs to the CPA3 antiporters (TC 2.A.63) subunit G family. May form a heterooligomeric complex that consists of seven subunits: mnhA2, mnhB2, mnhC2, mnhD2, mnhE2, mnhF2 and mnhG2.

It localises to the cell membrane. The sequence is that of Putative antiporter subunit mnhG2 (mnhG2) from Staphylococcus aureus (strain MRSA252).